A 311-amino-acid chain; its full sequence is Aspartate carbamoyltransferase catalytic subunit (311 aa).

Carbamoyl phosphate contacts are provided by Arg-55 and Thr-56. Lys-85 is an L-aspartate binding site. Carbamoyl phosphate is bound by residues Arg-106, His-135, and Gln-138. L-aspartate contacts are provided by Arg-168 and Arg-230. 2 residues coordinate carbamoyl phosphate: Leu-268 and Pro-269.

The protein belongs to the aspartate/ornithine carbamoyltransferase superfamily. ATCase family. Heterododecamer (2C3:3R2) of six catalytic PyrB chains organized as two trimers (C3), and six regulatory PyrI chains organized as three dimers (R2).

It catalyses the reaction carbamoyl phosphate + L-aspartate = N-carbamoyl-L-aspartate + phosphate + H(+). It participates in pyrimidine metabolism; UMP biosynthesis via de novo pathway; (S)-dihydroorotate from bicarbonate: step 2/3. Functionally, catalyzes the condensation of carbamoyl phosphate and aspartate to form carbamoyl aspartate and inorganic phosphate, the committed step in the de novo pyrimidine nucleotide biosynthesis pathway. This Serratia proteamaculans (strain 568) protein is Aspartate carbamoyltransferase catalytic subunit.